The chain runs to 377 residues: 23S rRNA (uracil(747)-C(5))-methyltransferase RlmC (377 aa).

[4Fe-4S] cluster is bound by residues cysteine 3, cysteine 11, cysteine 14, and cysteine 87. S-adenosyl-L-methionine-binding residues include glutamine 212, phenylalanine 241, glutamate 262, and asparagine 307. Cysteine 334 serves as the catalytic Nucleophile.

It belongs to the class I-like SAM-binding methyltransferase superfamily. RNA M5U methyltransferase family. RlmC subfamily.

The enzyme catalyses uridine(747) in 23S rRNA + S-adenosyl-L-methionine = 5-methyluridine(747) in 23S rRNA + S-adenosyl-L-homocysteine + H(+). Its function is as follows. Catalyzes the formation of 5-methyl-uridine at position 747 (m5U747) in 23S rRNA. This is 23S rRNA (uracil(747)-C(5))-methyltransferase RlmC from Proteus mirabilis (strain HI4320).